The sequence spans 524 residues: Cytokinin dehydrogenase 7 (524 aa).

The FAD-binding PCMH-type domain occupies 58–238 (NCVKPLAVVR…TRARVLLQPA (181 aa)). Residues Ala91, Gly93, Asn94, and Gly95 each coordinate FAD. At His96 the chain carries Pros-8alpha-FAD histidine. Positions 97, 101, 162, 167, 173, 177, 228, 479, 514, and 517 each coordinate FAD.

It belongs to the oxygen-dependent FAD-linked oxidoreductase family. The cofactor is FAD. In terms of tissue distribution, expressed in the vasculature of roots, hypocotyls, cotyledons and leaves of young seedlings. In flowers, expressed in the transmitting tissue of the gynoecium prior to pollination. Expressed in the mature embryo sac with maximum activity in the egg cell and the synergids.

It is found in the cytoplasm. The protein localises to the cytosol. The catalysed reaction is N(6)-dimethylallyladenine + A + H2O = 3-methyl-2-butenal + adenine + AH2. Catalyzes the oxidation of cytokinins, a family of N(6)-substituted adenine derivatives that are plant hormones, where the substituent is an isopentenyl group. Catalyzes in vitro the oxidation of various types of cytokinin nucleotides that are known as direct products of cytokinin biosynthesis. The chain is Cytokinin dehydrogenase 7 (CKX7) from Arabidopsis thaliana (Mouse-ear cress).